Here is a 248-residue protein sequence, read N- to C-terminus: Chromatin target of PRMT1 protein (248 aa).

A2 carries the N-acetylalanine modification. T33 carries the phosphothreonine modification. Phosphoserine is present on residues S40, S49, and S64. A Glycyl lysine isopeptide (Lys-Gly) (interchain with G-Cter in SUMO2) cross-link involves residue K70. Positions 151-204 (LRRGGVRGRGGPGRGGLGRGAMGRGGIGGRGRGMIGRGRGGFGGRGRGRGRGRG) are disordered. An interaction with PRMT1 region spans residues 153–206 (RGGVRGRGGPGRGGLGRGAMGRGGIGGRGRGMIGRGRGGFGGRGRGRGRGRGAL). The segment covering 157 to 195 (RGRGGPGRGGLGRGAMGRGGIGGRGRGMIGRGRGGFGGR) has biased composition (gly residues). Positions 194 to 203 (GRGRGRGRGR) match the GAR motif; involved in 5hmC binding motif. T242 carries the post-translational modification Phosphothreonine.

As to quaternary structure, interacts with PRMT1 and PRMT5. Interacts with the 5FMC complex; the interaction is methylation-dependent. Interacts with FYTTD1, SET and PRC1 complex members CBX4, RNF2 and PHC2; the interactions are methylation-independent. Interacts with ZNF148. Component of the transcription/export (TREX) complex at least composed of ALYREF/THOC4, DDX39B, SARNP/CIP29, CHTOP and the THO subcomplex; TREX seems to have dynamic structure involving ATP-dependent remodeling; in the complex interacts (methylated) with ALYREF/THOC4 and with DDX39B in a methylation-independent manner. Interacts (methylated) with NXF1; the interaction is mutually exclusive with the NXF1:THOC5 interaction. Interacts with WDR77 and ERH. Post-translationally, asymmetrically methylated by PRMT1. Symmetrically methylated by PRMT5. As to expression, expressed in an erythroid progenitor cell line derived from peripheral blood. Expressed in glioblastoma cells.

The protein localises to the nucleus. It localises to the nucleolus. The protein resides in the nucleoplasm. It is found in the nucleus speckle. Functionally, plays an important role in the ligand-dependent activation of estrogen receptor target genes. May play a role in the silencing of fetal globin genes. Recruits the 5FMC complex to ZNF148, leading to desumoylation of ZNF148 and subsequent transactivation of ZNF148 target genes. Plays an important role in the tumorigenicity of glioblastoma cells. Binds to 5-hydroxymethylcytosine (5hmC) and associates with the methylosome complex containing PRMT1, PRMT5, MEP50 and ERH. The CHTOP-methylosome complex associated with 5hmC is recruited to selective sites on the chromosome, where it methylates H4R3 and activates the transcription of genes involved in glioblastomagenesis. Its function is as follows. Required for effective mRNA nuclear export and is a component of the TREX complex which is thought to couple mRNA transcription, processing and nuclear export, and specifically associates with spliced mRNA and not with unspliced pre-mRNA. TREX is recruited to spliced mRNAs by a transcription-independent mechanism, binds to mRNA upstream of the exon-junction complex (EJC) and is recruited in a splicing- and cap-dependent manner to a region near the 5' end of the mRNA where it functions in mRNA export to the cytoplasm via the TAP/NFX1 pathway. The TREX complex is essential for the export of Kaposi's sarcoma-associated herpesvirus (KSHV) intronless mRNAs and infectious virus production. Stimulates DDX39B ATPase and helicase activities. In cooperation with ALYREF/THOC4 enhances NXF1 RNA binding activity. This is Chromatin target of PRMT1 protein (CHTOP) from Homo sapiens (Human).